Consider the following 171-residue polypeptide: S-ribosylhomocysteine lyase (171 aa).

Fe cation-binding residues include His-54, His-58, and Cys-128.

Belongs to the LuxS family. Homodimer. Requires Fe cation as cofactor.

The catalysed reaction is S-(5-deoxy-D-ribos-5-yl)-L-homocysteine = (S)-4,5-dihydroxypentane-2,3-dione + L-homocysteine. Functionally, involved in the synthesis of autoinducer 2 (AI-2) which is secreted by bacteria and is used to communicate both the cell density and the metabolic potential of the environment. The regulation of gene expression in response to changes in cell density is called quorum sensing. Catalyzes the transformation of S-ribosylhomocysteine (RHC) to homocysteine (HC) and 4,5-dihydroxy-2,3-pentadione (DPD). The protein is S-ribosylhomocysteine lyase of Cronobacter sakazakii (strain ATCC BAA-894) (Enterobacter sakazakii).